The following is a 307-amino-acid chain: Ornithine carbamoyltransferase (307 aa).

Carbamoyl phosphate contacts are provided by residues 53–56, glutamine 80, arginine 104, and 131–134; these read STRT and HPCQ. Residues asparagine 162, aspartate 220, and 224-225 contribute to the L-ornithine site; that span reads SM. Carbamoyl phosphate is bound by residues 260–261 and arginine 288; that span reads CL.

Belongs to the aspartate/ornithine carbamoyltransferase superfamily. OTCase family.

Its subcellular location is the cytoplasm. It catalyses the reaction carbamoyl phosphate + L-ornithine = L-citrulline + phosphate + H(+). It participates in amino-acid biosynthesis; L-arginine biosynthesis; L-arginine from L-ornithine and carbamoyl phosphate: step 1/3. Its function is as follows. Reversibly catalyzes the transfer of the carbamoyl group from carbamoyl phosphate (CP) to the N(epsilon) atom of ornithine (ORN) to produce L-citrulline. The sequence is that of Ornithine carbamoyltransferase from Nitrosomonas europaea (strain ATCC 19718 / CIP 103999 / KCTC 2705 / NBRC 14298).